Here is a 342-residue protein sequence, read N- to C-terminus: Flotillin-like protein FloA (342 aa).

The next 2 membrane-spanning stretches (helical) occupy residues 18-38 and 39-59; these read FFIF…GKFI and SLWF…IIGM.

The protein belongs to the flotillin-like FloA family. As to quaternary structure, homooligomerizes.

The protein resides in the cell membrane. It localises to the membrane raft. Functionally, found in functional membrane microdomains (FMM) that may be equivalent to eukaryotic membrane rafts. FMMs are highly dynamic and increase in number as cells age. Flotillins are thought to be important factors in membrane fluidity. This chain is Flotillin-like protein FloA, found in Protochlamydia amoebophila (strain UWE25).